The chain runs to 605 residues: MGDPVIRTASPYTNPIIKCPRLQRLSSGPSSSFINNNNSNNNNNKSSNMFNHDHVNKTNLHPGGVKPHVEHTELEEELHQKAHIDYDRVAIIANPSVASLYEDALVYETGTAITSSGALTAYSGKKTGRSPSDKRIVKEPSSENDIWWGPVNKPMSPEVWKINRERAVDYLNTRNRIYVVDGYAGWDEKYRIRVRVVCARAYHALFMRNMLIRPPREELEHFHPDYTIYNAGSFPANRYTEGMSSSTSVAINFAEKEMVILGTEYAGEMKKGIFTVMFYEGPVKHNILTLHSSANEGKDGDVTLFFGLSGTGKTTLSADPNRRLIGDDEHCWSDRGVFNIEGGCYAKTIGLSAEKEPDIFNAIRYGSVLENVVFNPETREVDYGDATLTENTRCAYPIEYIPNAKIPCLSPNHPKNIILLTCDARGVLPPISKLDSAQTMFHFISGYTSKMAGTEDGILEPQATFSSCFAQPFLALHPMRYAKMLAEKIENHNANAWLLNTGWVGAGFAQGGKRCPLKYTRAILDAIHSGELANVEYENYEVFNLQVPKSCPGVPSELLNPKTAWTAGANSFDTEVKKLGGLFLENFKKYESEATEDVIKAGPVV.

Residues 27–48 (SGPSSSFINNNNSNNNNNKSSN) show a composition bias toward low complexity. Residues 27 to 67 (SGPSSSFINNNNSNNNNNKSSNMFNHDHVNKTNLHPGGVKP) are disordered. 307–314 (GLSGTGKT) lines the ATP pocket.

It belongs to the phosphoenolpyruvate carboxykinase (ATP) family.

It carries out the reaction oxaloacetate + ATP = phosphoenolpyruvate + ADP + CO2. It functions in the pathway carbohydrate biosynthesis; gluconeogenesis. The polypeptide is Phosphoenolpyruvate carboxykinase (ATP) (acu-6) (Neurospora crassa (strain ATCC 24698 / 74-OR23-1A / CBS 708.71 / DSM 1257 / FGSC 987)).